Here is a 105-residue protein sequence, read N- to C-terminus: Small ribosomal subunit protein bS6 (105 aa).

This sequence belongs to the bacterial ribosomal protein bS6 family.

Its function is as follows. Binds together with bS18 to 16S ribosomal RNA. The protein is Small ribosomal subunit protein bS6 of Lawsonia intracellularis (strain PHE/MN1-00).